A 502-amino-acid polypeptide reads, in one-letter code: NADH-quinone oxidoreductase subunit N (502 aa).

Helical transmembrane passes span 16–36, 47–67, 85–105, 113–133, 138–158, 172–192, 213–233, 248–268, 273–293, 310–330, 337–357, 387–407, 410–430, and 470–490; these read TLVPMLIPIIGALFIIVIDLF, MLSLLILGVDFVALVDSAGVF, LAILSQFIIVGASMLFIPLAL, FSYPEFFALFLFMIAGFQFMV, LILIFVGLETASLALYTLIAM, FTMGALAAGFFSFGSMVFYAL, IGFVLVGVVFLLAAFGFKLSM, SAALAGYMSIVPKIAAFIVAM, FLIHSGVVWLEVILYMGVVVT, MLAYSSISHAGFVMAAILIGT, LFLYWILFSFTNLGSFSMLWI, ASIMALFMLSLAGIPPFALFW, MYLMSSAITGGYTVLALIMAL, and TIIGIAAIGTIFAFVAVNQLI.

The protein belongs to the complex I subunit 2 family. NDH-1 is composed of 14 different subunits. Subunits NuoA, H, J, K, L, M, N constitute the membrane sector of the complex.

It localises to the cell inner membrane. It carries out the reaction a quinone + NADH + 5 H(+)(in) = a quinol + NAD(+) + 4 H(+)(out). Functionally, NDH-1 shuttles electrons from NADH, via FMN and iron-sulfur (Fe-S) centers, to quinones in the respiratory chain. The immediate electron acceptor for the enzyme in this species is believed to be ubiquinone. Couples the redox reaction to proton translocation (for every two electrons transferred, four hydrogen ions are translocated across the cytoplasmic membrane), and thus conserves the redox energy in a proton gradient. This is NADH-quinone oxidoreductase subunit N from Sulfurimonas denitrificans (strain ATCC 33889 / DSM 1251) (Thiomicrospira denitrificans (strain ATCC 33889 / DSM 1251)).